A 739-amino-acid polypeptide reads, in one-letter code: NAD(P)H-quinone oxidoreductase subunit 5, chloroplastic (739 aa).

Transmembrane regions (helical) follow at residues 9 to 29 (LIIP…LIFF), 40 to 60 (WAFP…NLSI), 89 to 109 (IDSL…LVLI), 125 to 145 (FAYM…SNLI), 147 to 167 (IHIF…FWFT), 185 to 205 (GDFG…SFEF), 224 to 244 (LFVI…SAQF), 258 to 278 (TPIS…FLVA), 283 to 303 (LFTV…ITIL), 327 to 347 (LGYI…FHLI), 354 to 374 (ALLF…VGYS), 396 to 416 (TAFF…CFWS), 425 to 445 (WLYS…TAFY), 546 to 566 (LFPL…GIPF), 605 to 625 (IFSV…YRPI), and 718 to 738 (ISSY…IFQV).

Belongs to the complex I subunit 5 family. As to quaternary structure, NDH is composed of at least 16 different subunits, 5 of which are encoded in the nucleus.

It is found in the plastid. The protein localises to the chloroplast thylakoid membrane. The enzyme catalyses a plastoquinone + NADH + (n+1) H(+)(in) = a plastoquinol + NAD(+) + n H(+)(out). It carries out the reaction a plastoquinone + NADPH + (n+1) H(+)(in) = a plastoquinol + NADP(+) + n H(+)(out). In terms of biological role, NDH shuttles electrons from NAD(P)H:plastoquinone, via FMN and iron-sulfur (Fe-S) centers, to quinones in the photosynthetic chain and possibly in a chloroplast respiratory chain. The immediate electron acceptor for the enzyme in this species is believed to be plastoquinone. Couples the redox reaction to proton translocation, and thus conserves the redox energy in a proton gradient. This chain is NAD(P)H-quinone oxidoreductase subunit 5, chloroplastic (ndhF), found in Buxus microphylla (Littleleaf boxwood).